The chain runs to 214 residues: 3-isopropylmalate dehydratase small subunit (214 aa).

This sequence belongs to the LeuD family. LeuD type 1 subfamily. Heterodimer of LeuC and LeuD.

The catalysed reaction is (2R,3S)-3-isopropylmalate = (2S)-2-isopropylmalate. It functions in the pathway amino-acid biosynthesis; L-leucine biosynthesis; L-leucine from 3-methyl-2-oxobutanoate: step 2/4. In terms of biological role, catalyzes the isomerization between 2-isopropylmalate and 3-isopropylmalate, via the formation of 2-isopropylmaleate. The protein is 3-isopropylmalate dehydratase small subunit of Pseudomonas entomophila (strain L48).